A 298-amino-acid polypeptide reads, in one-letter code: Inosose dehydratase (298 aa).

This sequence belongs to the IolE/MocC family. It depends on glutathione as a cofactor. Co(2+) is required as a cofactor. Requires Mn(2+) as cofactor.

The catalysed reaction is scyllo-inosose = 3D-3,5/4-trihydroxycyclohexane-1,2-dione + H2O. The protein operates within polyol metabolism; myo-inositol degradation into acetyl-CoA; acetyl-CoA from myo-inositol: step 2/7. Catalyzes the dehydration of inosose (2-keto-myo-inositol, 2KMI or 2,4,6/3,5-pentahydroxycyclohexanone) to 3D-(3,5/4)-trihydroxycyclohexane-1,2-dione (D-2,3-diketo-4-deoxy-epi-inositol). The polypeptide is Inosose dehydratase (Bacillus anthracis (strain CDC 684 / NRRL 3495)).